Here is a 211-residue protein sequence, read N- to C-terminus: Agamous-like MADS-box protein AGL12 (211 aa).

Positions 3–57 (RGKIQLKRIENPVHRQVTFCKRRTGLLKKAKELSVLCDAEIGVVIFSPQGKLFEL) constitute an MADS-box domain. The 91-residue stretch at 95-185 (NLDPKDEINV…LEKIEENNNS (91 aa)) folds into the K-box domain.

Preferentially expressed in roots. In root meristem, expressed in external cells of columella, lateral root cap and atrichoblasts. In mature root, expressed in the central cylinder. Expressed in leaf vasculature, young floral meristems and nectaries.

Its subcellular location is the nucleus. In terms of biological role, probable transcription activator that regulates root development by controlling cell proliferation in root meristem. May mediate responses to auxin in the root. May act as promoter of the flowering transition through up-regulation of SOC, FT and LFY. The protein is Agamous-like MADS-box protein AGL12 of Arabidopsis thaliana (Mouse-ear cress).